The chain runs to 375 residues: Trichodiene synthase (375 aa).

It belongs to the trichodiene synthase family.

The catalysed reaction is (2E,6E)-farnesyl diphosphate = trichodiene + diphosphate. It functions in the pathway sesquiterpene biosynthesis; trichothecene biosynthesis. TS is a member of the terpene cyclase group of enzymes. It catalyzes the isomerization and cyclization of farnesyl pyro-phosphate to form trichodiene, the first cyclic intermediate in the biosynthetic pathway for trichothecenes. It serves to branch trichothecene biosynthesis from the isoprenoid pathway. This Fusarium boothii protein is Trichodiene synthase (TRI5).